The primary structure comprises 217 residues: ATP phosphoribosyltransferase (217 aa).

Belongs to the ATP phosphoribosyltransferase family. Short subfamily. As to quaternary structure, heteromultimer composed of HisG and HisZ subunits.

The protein localises to the cytoplasm. It carries out the reaction 1-(5-phospho-beta-D-ribosyl)-ATP + diphosphate = 5-phospho-alpha-D-ribose 1-diphosphate + ATP. Its pathway is amino-acid biosynthesis; L-histidine biosynthesis; L-histidine from 5-phospho-alpha-D-ribose 1-diphosphate: step 1/9. Functionally, catalyzes the condensation of ATP and 5-phosphoribose 1-diphosphate to form N'-(5'-phosphoribosyl)-ATP (PR-ATP). Has a crucial role in the pathway because the rate of histidine biosynthesis seems to be controlled primarily by regulation of HisG enzymatic activity. This Syntrophomonas wolfei subsp. wolfei (strain DSM 2245B / Goettingen) protein is ATP phosphoribosyltransferase.